We begin with the raw amino-acid sequence, 89 residues long: MKCKRLNEVIELLQPAWQKEPDLNLLQFLQKLAKESGFDGELADLTDDILIYHLKMRDSAKDAVIPGLQKDYEEDFKTALLRARGVIKE.

It to H.influenzae HI_0845.

In Escherichia coli O157:H7, this protein is Protein YihD (yihD).